We begin with the raw amino-acid sequence, 403 residues long: Soluble calcium-activated nucleotidase 1 (403 aa).

At 1-44 (MPIQPFDQREWNEPMHSLRISVGGLPVLASMTKATDPRFRPRWR) the chain is on the cytoplasmic side. A helical; Signal-anchor for type II membrane protein transmembrane segment spans residues 45–61 (VILTSFVGAALLWLLYS). Residues 62–403 (HHQTPVSGRP…SVKYEGIEFI (342 aa)) are Lumenal-facing. Asparagine 90 is a glycosylation site (N-linked (GlcNAc...) asparagine). Ca(2+) is bound by residues serine 170, aspartate 171, glutamate 217, glutamate 286, serine 347, and glutamate 398.

It belongs to the apyrase family. In terms of assembly, monomer. Homodimer; dimerization is Ca(2+)-dependent. Ca(2+) serves as cofactor. As to expression, detected in intestine, thymus, heart, lung, spleen, kidney, liver, testis, skeletal muscle and brain.

The protein resides in the endoplasmic reticulum membrane. It is found in the golgi apparatus. The protein localises to the golgi stack membrane. The enzyme catalyses a ribonucleoside 5'-diphosphate + H2O = a ribonucleoside 5'-phosphate + phosphate + H(+). Functionally, calcium-dependent nucleotidase with a preference for UDP. The order of activity with different substrates is UDP &gt; GDP &gt; IDP &gt;&gt; UTP &gt; CDP = GTP = ITP. Has very low activity towards ADP and even lower activity towards ATP. Does not hydrolyze AMP and GMP. Involved in proteoglycan synthesis. The polypeptide is Soluble calcium-activated nucleotidase 1 (Cant1) (Rattus norvegicus (Rat)).